Here is a 244-residue protein sequence, read N- to C-terminus: MSDTPQSPAQGSLAEHDEARPMRTVKSFVMRAGRMTEGQQRGLDLGWPKFGLELSDEVQDFDAIFGRQAPRTFEIGFGMGHSTLEMAAAAPDIDFIGVEVHKPGVGALLNGLLTQGLGNVRVYSCDALEVLRHCVADASLDRLLLFFPDPWHKKRHHKRRIVQPEFAELVRRKLKVGGVLHMATDWEPYAEHMLDVMSAAPGYRNQAEDGRFVARPQERPVTKFERRGERLGHGVWDLKFERID.

Positions 1–10 are enriched in polar residues; that stretch reads MSDTPQSPAQ. The tract at residues 1–20 is disordered; it reads MSDTPQSPAQGSLAEHDEAR. Positions 74, 99, 126, and 149 each coordinate S-adenosyl-L-methionine. The active site involves Asp149. Residues Lys153, Asp185, and 222-225 each bind substrate; that span reads TKFE.

This sequence belongs to the class I-like SAM-binding methyltransferase superfamily. TrmB family.

It catalyses the reaction guanosine(46) in tRNA + S-adenosyl-L-methionine = N(7)-methylguanosine(46) in tRNA + S-adenosyl-L-homocysteine. The protein operates within tRNA modification; N(7)-methylguanine-tRNA biosynthesis. Its function is as follows. Catalyzes the formation of N(7)-methylguanine at position 46 (m7G46) in tRNA. The sequence is that of tRNA (guanine-N(7)-)-methyltransferase from Pseudomonas aeruginosa (strain UCBPP-PA14).